Here is a 488-residue protein sequence, read N- to C-terminus: MLRIAKEALTFDDVLLVPAHSTVLPNTADLSTQLTKTIRLNIPMLSAAMDTVTEARLAIALAQEGGIGFIHKNMSIERQAEEVRRVKKHESGVVTDPQTVLPTTTLREVKELTERNGFAGYPVVTEENELVGIITGRDVRFVTDLNQPVSVYMTPKERLVTVREGEAREVVLAKMHEKRVEKALVVDDEFHLIGMITVKDFQKAERKPNACKDEQGRLRVGAAVGAGAGNEERVDALVAAGVDVLLIDSSHGHSEGVLQRIRETRAKYPDLQIIGGNVATAAGARALAEAGCSAVKVGIGPGSICTTRIVTGVGVPQITAVADAVEALEGTGIPVIADGGIRFSGDIAKAIAAGASAVMVGSMLAGTEESPGEIELYQGRSYKSYRGMGSLGAMSKGSSDRYFQSDNAADKLVPEGIEGRVAYKGRLKEIIHQQMGGLRSCMGLTGCGTIDELRTKAEFVRISGAGIQESHVHDVTITKESPNYRLGS.

CBS domains follow at residues 93 to 149 (VVTD…NQPV) and 153 to 214 (MTPK…CKDE). Residues Asp248 and 248–250 (DSS) contribute to the NAD(+) site. At Lys267 the chain carries N6-acetyllysine. 298-300 (GIG) lines the NAD(+) pocket. The K(+) site is built by Gly300 and Gly302. Position 303 (Ser303) interacts with IMP. Cys305 provides a ligand contact to K(+). Cys305 functions as the Thioimidate intermediate in the catalytic mechanism. IMP is bound by residues 338 to 340 (DGG), 361 to 362 (GS), and 385 to 389 (YRGMG). Arg401 functions as the Proton acceptor in the catalytic mechanism. Residue Glu415 participates in IMP binding. The residue at position 428 (Lys428) is an N6-acetyllysine. Residues Glu469, Ser470, and His471 each contribute to the K(+) site.

Belongs to the IMPDH/GMPR family. As to quaternary structure, homotetramer. K(+) is required as a cofactor.

The catalysed reaction is IMP + NAD(+) + H2O = XMP + NADH + H(+). It participates in purine metabolism; XMP biosynthesis via de novo pathway; XMP from IMP: step 1/1. With respect to regulation, mycophenolic acid (MPA) is a non-competitive inhibitor that prevents formation of the closed enzyme conformation by binding to the same site as the amobile flap. In contrast, mizoribine monophosphate (MZP) is a competitive inhibitor that induces the closed conformation. MPA is a potent inhibitor of mammalian IMPDHs but a poor inhibitor of the bacterial enzymes. MZP is a more potent inhibitor of bacterial IMPDH. In terms of biological role, catalyzes the conversion of inosine 5'-phosphate (IMP) to xanthosine 5'-phosphate (XMP), the first committed and rate-limiting step in the de novo synthesis of guanine nucleotides, and therefore plays an important role in the regulation of cell growth. This is Inosine-5'-monophosphate dehydrogenase from Escherichia coli O157:H7.